A 481-amino-acid polypeptide reads, in one-letter code: ATP synthase subunit beta, plastid (481 aa).

Position 162-169 (G162–T169) interacts with ATP.

It belongs to the ATPase alpha/beta chains family. F-type ATPases have 2 components, CF(1) - the catalytic core - and CF(0) - the membrane proton channel. CF(1) has five subunits: alpha(3), beta(3), gamma(1), delta(1), epsilon(1). CF(0) has four main subunits: a(1), b(1), b'(1) and c(9-12).

The protein localises to the plastid membrane. The enzyme catalyses ATP + H2O + 4 H(+)(in) = ADP + phosphate + 5 H(+)(out). In terms of biological role, produces ATP from ADP in the presence of a proton gradient across the membrane. The catalytic sites are hosted primarily by the beta subunits. The protein is ATP synthase subunit beta, plastid (atpB) of Prototheca wickerhamii.